The chain runs to 135 residues: MRRAYRLRRPEQFRRVRQEGRTFTSPWLILTVAPARRRTLRCGFVVSRRVGGAVQRNRARRRVREAVRLLLPRLTAGYDMVFTIRTPEVIDAPFTQLQDDITALLRQACLLPAPTNETVSPVSDTPLPQHERGSQ.

The segment at 115 to 135 is disordered; that stretch reads TNETVSPVSDTPLPQHERGSQ.

This sequence belongs to the RnpA family. As to quaternary structure, consists of a catalytic RNA component (M1 or rnpB) and a protein subunit.

It catalyses the reaction Endonucleolytic cleavage of RNA, removing 5'-extranucleotides from tRNA precursor.. Its function is as follows. RNaseP catalyzes the removal of the 5'-leader sequence from pre-tRNA to produce the mature 5'-terminus. It can also cleave other RNA substrates such as 4.5S RNA. The protein component plays an auxiliary but essential role in vivo by binding to the 5'-leader sequence and broadening the substrate specificity of the ribozyme. This is Ribonuclease P protein component from Chloroflexus aurantiacus (strain ATCC 29366 / DSM 635 / J-10-fl).